The following is a 238-amino-acid chain: Ribonuclease PH (238 aa).

The interval 64 to 86 is disordered; it reads GMLPRSTGSRMDREAARGKQSGR. Phosphate is bound by residues R86 and 124-126; that span reads GTR.

It belongs to the RNase PH family. In terms of assembly, homohexameric ring arranged as a trimer of dimers.

It carries out the reaction tRNA(n+1) + phosphate = tRNA(n) + a ribonucleoside 5'-diphosphate. Its function is as follows. Phosphorolytic 3'-5' exoribonuclease that plays an important role in tRNA 3'-end maturation. Removes nucleotide residues following the 3'-CCA terminus of tRNAs; can also add nucleotides to the ends of RNA molecules by using nucleoside diphosphates as substrates, but this may not be physiologically important. Probably plays a role in initiation of 16S rRNA degradation (leading to ribosome degradation) during starvation. The sequence is that of Ribonuclease PH from Methylobacillus flagellatus (strain ATCC 51484 / DSM 6875 / VKM B-1610 / KT).